A 943-amino-acid polypeptide reads, in one-letter code: Isoleucine--tRNA ligase (943 aa).

Residues 58–68 (PYANGSIHIGH) carry the 'HIGH' region motif. E567 serves as a coordination point for L-isoleucyl-5'-AMP. A 'KMSKS' region motif is present at residues 608 to 612 (KMSKS). K611 provides a ligand contact to ATP. C906, C909, C926, and C929 together coordinate Zn(2+).

It belongs to the class-I aminoacyl-tRNA synthetase family. IleS type 1 subfamily. As to quaternary structure, monomer. The cofactor is Zn(2+).

Its subcellular location is the cytoplasm. It catalyses the reaction tRNA(Ile) + L-isoleucine + ATP = L-isoleucyl-tRNA(Ile) + AMP + diphosphate. Catalyzes the attachment of isoleucine to tRNA(Ile). As IleRS can inadvertently accommodate and process structurally similar amino acids such as valine, to avoid such errors it has two additional distinct tRNA(Ile)-dependent editing activities. One activity is designated as 'pretransfer' editing and involves the hydrolysis of activated Val-AMP. The other activity is designated 'posttransfer' editing and involves deacylation of mischarged Val-tRNA(Ile). The chain is Isoleucine--tRNA ligase from Pseudomonas aeruginosa (strain ATCC 15692 / DSM 22644 / CIP 104116 / JCM 14847 / LMG 12228 / 1C / PRS 101 / PAO1).